The following is a 189-amino-acid chain: Leucine repeat adapter protein 25 (189 aa).

Position 28 is a phosphoserine (S28). The segment at 54 to 83 is disordered; it reads ELSRAARAPDGPRHAAGAANAGPAAGPRRP. Residues 67–83 are compositionally biased toward low complexity; it reads HAAGAANAGPAAGPRRP. The stretch at 86 to 114 is one LRR repeat; sequence LDSALAALRKEMVGLRQLDMSLLCQLWGL. A disordered region spans residues 141 to 175; that stretch reads DSSYPPDAGLSDDEEPPDASLPPDPPPLTVPQTHN. Over residues 159 to 169 the composition is skewed to pro residues; that stretch reads ASLPPDPPPLT. Phosphoserine is present on S188.

It belongs to the FAM89 family. As to quaternary structure, interacts with SKI. Interacts (via LRR repeat) with CDC42BPA (via AGC-kinase C-terminal domain), CDC42BPB (via AGC-kinase C-terminal domain) and LIMK1 (via LIM zinc-binding domains). Forms a tripartite complex with CDC42BPA, CDC42BPB and LIMK1.

The protein resides in the cytoplasm. It is found in the cell projection. It localises to the lamellipodium. In terms of biological role, negatively regulates TGF-beta-induced signaling; in cooperation with SKI prevents the translocation of SMAD2 from the nucleus to the cytoplasm in response to TGF-beta. Acts as an adapter that mediates the specific recognition of LIMK1 by CDC42BPA and CDC42BPB in the lamellipodia. LRAP25-mediated CDC42BPA/CDC42BPB targeting to LIMK1 and the lamellipodium results in LIMK1 activation and the subsequent phosphorylation of CFL1 which is important for lamellipodial F-actin regulation. The sequence is that of Leucine repeat adapter protein 25 (FAM89B) from Homo sapiens (Human).